The primary structure comprises 240 residues: Adiponectin (240 aa).

The signal sequence occupies residues 1 to 17 (MLLQGALLLLLALPSHG). Lys-28 bears the 5-hydroxylysine mark. Lys-28 carries O-linked (Gal...) hydroxylysine glycosylation. A disordered region spans residues 29–100 (GACAGWMAGI…GTPGRKGEPG (72 aa)). Cys-31 bears the S-(2-succinyl)cysteine mark. 4-hydroxyproline is present on residues Pro-39, Pro-42, and Pro-48. One can recognise a Collagen-like domain in the interval 43–102 (GHNGTPGRDGRDGTPGEKGEKGDPGLVGPKGDTGETGITGIEGPRGFPGTPGRKGEPGES). Basic and acidic residues predominate over residues 50–65 (RDGRDGTPGEKGEKGD). 5-hydroxylysine occurs at positions 60, 63, and 72. Residues Lys-60, Lys-63, and Lys-72 are each glycosylated (O-linked (Gal...) hydroxylysine). Pro-86 bears the 4-hydroxyproline mark. Lys-96 carries the post-translational modification 5-hydroxylysine. O-linked (Gal...) hydroxylysine glycosylation is present at Lys-96. The C1q domain maps to 103-240 (AYVYRSAFSV…GFLLYHNIVE (138 aa)).

Homomultimer. Forms trimers, hexamers and 12- to 18-mers. The trimers (low molecular weight complexes / LMW) are assembled via non-covalent interactions of the collagen-like domains in a triple helix and hydrophobic interactions within the globular C1q domain. Several trimers can associate to form disulfide-linked hexamers (middle molecular weight complexes / MMW) and larger complexes (higher molecular weight / HMW). The HMW-complex assembly is also modulated by the degree of lysine hydroxylation and glycosylation. LMW, MMW and HMW complexes bind to HBEGF, MMW and HMW complexes bind to PDGFB, and HMW complex binds to FGF2. Interacts with CTRP9 via the C1q domain (heterotrimeric complex). HMW complexes are more extensively glycosylated than smaller oligomers. Hydroxylation and glycosylation of the lysine residues within the collagen-like domain of adiponectin seem to be critically involved in regulating the formation and/or secretion of HMW complexes and consequently contribute to the insulin-sensitizing activity of adiponectin in hepatocytes. In terms of processing, O-glycosylated. O-linked glycans on hydroxylysine residues consist of Glc-Gal disaccharides bound to the oxygen atom of post-translationally added hydroxyl groups. O-linked glycosylations elsewhere disialylated with the structure Neu5Acalpha2-&gt;8Neu5Acalpha2-&gt;3Gal. Sialylated by alpha 2,8-sialyltransferase III. Desialylated forms are rapidly cleared from the circulation. Not N-glycosylated. Post-translationally, succination of Cys-31 by the Krebs cycle intermediate fumarate, which leads to S-(2-succinyl)cysteine residues, inhibits polymerization and secretion of adiponectin. Adiponectin is a major target for succination in both adipocytes and adipose tissue of diabetic mammals. It was proposed that succination of proteins is a biomarker of mitochondrial stress and accumulation of Krebs cycle intermediates in adipose tissue in diabetes and that succination of adiponectin may contribute to the decrease in plasma adiponectin in diabetes.

It localises to the secreted. With respect to regulation, polymerization and secretion of adiponectin is inhibited by succination of cysteine residues by the Krebs cycle intermediate fumarate, which leads to S-(2-succinyl)cysteine residues. In terms of biological role, important adipokine involved in the control of fat metabolism and insulin sensitivity, with direct anti-diabetic, anti-atherogenic and anti-inflammatory activities. Stimulates AMPK phosphorylation and activation in the liver and the skeletal muscle, enhancing glucose utilization and fatty-acid combustion. Antagonizes TNF-alpha by negatively regulating its expression in various tissues such as liver and macrophages, and also by counteracting its effects. Inhibits endothelial NF-kappa-B signaling through a cAMP-dependent pathway. May play a role in cell growth, angiogenesis and tissue remodeling by binding and sequestering various growth factors with distinct binding affinities, depending on the type of complex, LMW, MMW or HMW. This chain is Adiponectin (ADIPOQ), found in Bos taurus (Bovine).